Reading from the N-terminus, the 259-residue chain is Deoxyribose-phosphate aldolase (259 aa).

Catalysis depends on Asp102, which acts as the Proton donor/acceptor. The active-site Schiff-base intermediate with acetaldehyde is the Lys166. Lys200 functions as the Proton donor/acceptor in the catalytic mechanism.

Belongs to the DeoC/FbaB aldolase family. DeoC type 2 subfamily.

It is found in the cytoplasm. It carries out the reaction 2-deoxy-D-ribose 5-phosphate = D-glyceraldehyde 3-phosphate + acetaldehyde. Its pathway is carbohydrate degradation; 2-deoxy-D-ribose 1-phosphate degradation; D-glyceraldehyde 3-phosphate and acetaldehyde from 2-deoxy-alpha-D-ribose 1-phosphate: step 2/2. Catalyzes a reversible aldol reaction between acetaldehyde and D-glyceraldehyde 3-phosphate to generate 2-deoxy-D-ribose 5-phosphate. The chain is Deoxyribose-phosphate aldolase from Vibrio cholerae serotype O1 (strain ATCC 39315 / El Tor Inaba N16961).